We begin with the raw amino-acid sequence, 172 residues long: NAD(P)H-quinone oxidoreductase subunit J (172 aa).

Belongs to the complex I 30 kDa subunit family. In terms of assembly, NDH-1 can be composed of about 15 different subunits; different subcomplexes with different compositions have been identified which probably have different functions.

It localises to the cellular thylakoid membrane. The catalysed reaction is a plastoquinone + NADH + (n+1) H(+)(in) = a plastoquinol + NAD(+) + n H(+)(out). It carries out the reaction a plastoquinone + NADPH + (n+1) H(+)(in) = a plastoquinol + NADP(+) + n H(+)(out). Its function is as follows. NDH-1 shuttles electrons from an unknown electron donor, via FMN and iron-sulfur (Fe-S) centers, to quinones in the respiratory and/or the photosynthetic chain. The immediate electron acceptor for the enzyme in this species is believed to be plastoquinone. Couples the redox reaction to proton translocation, and thus conserves the redox energy in a proton gradient. Cyanobacterial NDH-1 also plays a role in inorganic carbon-concentration. This is NAD(P)H-quinone oxidoreductase subunit J from Synechococcus sp. (strain ATCC 27144 / PCC 6301 / SAUG 1402/1) (Anacystis nidulans).